A 502-amino-acid polypeptide reads, in one-letter code: Bifunctional purine biosynthesis protein PurH (502 aa).

The MGS-like domain occupies 1–144 (MKKRALISVF…KNFQDVVVIS (144 aa)).

It belongs to the PurH family.

It catalyses the reaction (6R)-10-formyltetrahydrofolate + 5-amino-1-(5-phospho-beta-D-ribosyl)imidazole-4-carboxamide = 5-formamido-1-(5-phospho-D-ribosyl)imidazole-4-carboxamide + (6S)-5,6,7,8-tetrahydrofolate. The catalysed reaction is IMP + H2O = 5-formamido-1-(5-phospho-D-ribosyl)imidazole-4-carboxamide. The protein operates within purine metabolism; IMP biosynthesis via de novo pathway; 5-formamido-1-(5-phospho-D-ribosyl)imidazole-4-carboxamide from 5-amino-1-(5-phospho-D-ribosyl)imidazole-4-carboxamide (10-formyl THF route): step 1/1. It participates in purine metabolism; IMP biosynthesis via de novo pathway; IMP from 5-formamido-1-(5-phospho-D-ribosyl)imidazole-4-carboxamide: step 1/1. This is Bifunctional purine biosynthesis protein PurH from Clostridium beijerinckii (strain ATCC 51743 / NCIMB 8052) (Clostridium acetobutylicum).